The following is a 244-amino-acid chain: U4/U6.U5 tri-snRNP-associated protein 3-like protein C162.01c (244 aa).

2 stretches are compositionally biased toward basic and acidic residues: residues 1-11 and 20-116; these read MSSSRSGEHRR and ESSR…RRDG. Disordered stretches follow at residues 1–192 and 223–244; these read MSSS…EDEA and KKTK…LDNE. Residues Ser121 and Ser140 each carry the phosphoserine modification. Basic and acidic residues predominate over residues 126-182; sequence GLERKREHEKLQAPSPKEEEERPVDQGDKMDGVKEDKDGSLEVGKSHDAMTRTKSAE. Positions 183 to 192 are enriched in acidic residues; the sequence is EEIVEQEDEA.

The protein belongs to the SNUT3 family. In terms of assembly, part of a tri-snRNP complex.

Its subcellular location is the nucleus. Functionally, may play a role in mRNA splicing. This Schizosaccharomyces pombe (strain 972 / ATCC 24843) (Fission yeast) protein is U4/U6.U5 tri-snRNP-associated protein 3-like protein C162.01c.